Consider the following 504-residue polypeptide: AMP phosphorylase (504 aa).

Residues glycine 169, 195–200 (SRAITS), and threonine 204 each bind AMP. Aspartate 257 (proton donor) is an active-site residue. Residues serine 265 and lysine 289 each contribute to the AMP site.

This sequence belongs to the thymidine/pyrimidine-nucleoside phosphorylase family. Type 2 subfamily.

It catalyses the reaction AMP + phosphate = alpha-D-ribose 1,5-bisphosphate + adenine. The enzyme catalyses CMP + phosphate = cytosine + alpha-D-ribose 1,5-bisphosphate. It carries out the reaction UMP + phosphate = alpha-D-ribose 1,5-bisphosphate + uracil. In terms of biological role, catalyzes the conversion of AMP and phosphate to adenine and ribose 1,5-bisphosphate (R15P). Exhibits phosphorylase activity toward CMP and UMP in addition to AMP. Functions in an archaeal AMP degradation pathway, together with R15P isomerase and RubisCO. This is AMP phosphorylase from Methanococcus aeolicus (strain ATCC BAA-1280 / DSM 17508 / OCM 812 / Nankai-3).